A 360-amino-acid polypeptide reads, in one-letter code: DNA replication and repair protein RecF (360 aa).

33–40 (GENGSGKT) is a binding site for ATP.

Belongs to the RecF family.

The protein localises to the cytoplasm. In terms of biological role, the RecF protein is involved in DNA metabolism; it is required for DNA replication and normal SOS inducibility. RecF binds preferentially to single-stranded, linear DNA. It also seems to bind ATP. The polypeptide is DNA replication and repair protein RecF (Rickettsia massiliae (strain Mtu5)).